Here is a 390-residue protein sequence, read N- to C-terminus: 1-deoxy-D-xylulose 5-phosphate reductoisomerase (390 aa).

Positions 10, 11, 12, 13, 38, 40, and 123 each coordinate NADPH. Lysine 124 contributes to the 1-deoxy-D-xylulose 5-phosphate binding site. Glutamate 125 contacts NADPH. Aspartate 149 is a Mn(2+) binding site. Residues serine 150, glutamate 151, serine 175, and histidine 198 each coordinate 1-deoxy-D-xylulose 5-phosphate. A Mn(2+)-binding site is contributed by glutamate 151. Glycine 204 serves as a coordination point for NADPH. 1-deoxy-D-xylulose 5-phosphate contacts are provided by serine 211, asparagine 216, lysine 217, and glutamate 220. Glutamate 220 is a binding site for Mn(2+).

Belongs to the DXR family. It depends on Mg(2+) as a cofactor. Mn(2+) is required as a cofactor.

The enzyme catalyses 2-C-methyl-D-erythritol 4-phosphate + NADP(+) = 1-deoxy-D-xylulose 5-phosphate + NADPH + H(+). The protein operates within isoprenoid biosynthesis; isopentenyl diphosphate biosynthesis via DXP pathway; isopentenyl diphosphate from 1-deoxy-D-xylulose 5-phosphate: step 1/6. Functionally, catalyzes the NADPH-dependent rearrangement and reduction of 1-deoxy-D-xylulose-5-phosphate (DXP) to 2-C-methyl-D-erythritol 4-phosphate (MEP). The chain is 1-deoxy-D-xylulose 5-phosphate reductoisomerase from Paracoccus denitrificans (strain Pd 1222).